A 64-amino-acid polypeptide reads, in one-letter code: Protein sigN173 (64 aa).

This is Protein sigN173 from Dictyostelium discoideum (Social amoeba).